The following is a 219-amino-acid chain: 7-cyano-7-deazaguanine synthase (219 aa).

10-20 contributes to the ATP binding site; it reads FSGGQDSTTCL. 4 residues coordinate Zn(2+): Cys-187, Cys-196, Cys-199, and Cys-202.

This sequence belongs to the QueC family. As to quaternary structure, homodimer. Zn(2+) is required as a cofactor.

It catalyses the reaction 7-carboxy-7-deazaguanine + NH4(+) + ATP = 7-cyano-7-deazaguanine + ADP + phosphate + H2O + H(+). The protein operates within purine metabolism; 7-cyano-7-deazaguanine biosynthesis. Its function is as follows. Catalyzes the ATP-dependent conversion of 7-carboxy-7-deazaguanine (CDG) to 7-cyano-7-deazaguanine (preQ(0)). The chain is 7-cyano-7-deazaguanine synthase from Lysinibacillus sphaericus (strain C3-41).